The following is a 381-amino-acid chain: 8-amino-7-oxononanoate synthase (381 aa).

Arg27 contributes to the substrate binding site. 105–106 contacts pyridoxal 5'-phosphate; that stretch reads GY. Position 130 (His130) interacts with substrate. Pyridoxal 5'-phosphate-binding positions include Ser176, 201–204, and 232–235; these read DEAH and TLSK. Lys235 is subject to N6-(pyridoxal phosphate)lysine. Thr345 contributes to the substrate binding site.

Belongs to the class-II pyridoxal-phosphate-dependent aminotransferase family. BioF subfamily. As to quaternary structure, homodimer. Requires pyridoxal 5'-phosphate as cofactor.

It catalyses the reaction 6-carboxyhexanoyl-[ACP] + L-alanine + H(+) = (8S)-8-amino-7-oxononanoate + holo-[ACP] + CO2. It participates in cofactor biosynthesis; biotin biosynthesis. In terms of biological role, catalyzes the decarboxylative condensation of pimeloyl-[acyl-carrier protein] and L-alanine to produce 8-amino-7-oxononanoate (AON), [acyl-carrier protein], and carbon dioxide. This chain is 8-amino-7-oxononanoate synthase, found in Mycolicibacterium paratuberculosis (strain ATCC BAA-968 / K-10) (Mycobacterium paratuberculosis).